A 521-amino-acid polypeptide reads, in one-letter code: Glutamyl-tRNA(Gln) amidotransferase subunit B, mitochondrial (521 aa).

The transit peptide at 1-22 directs the protein to the mitochondrion; sequence MIALLRWGIARPSAPLRWSRCF.

Belongs to the GatB/GatE family. GatB subfamily. As to quaternary structure, subunit of the heterotrimeric GatCAB amidotransferase (AdT) complex, composed of A, B and C subunits.

Its subcellular location is the mitochondrion. The enzyme catalyses L-glutamyl-tRNA(Gln) + L-glutamine + ATP + H2O = L-glutaminyl-tRNA(Gln) + L-glutamate + ADP + phosphate + H(+). Functionally, allows the formation of correctly charged Gln-tRNA(Gln) through the transamidation of misacylated Glu-tRNA(Gln) in the mitochondria. The reaction takes place in the presence of glutamine and ATP through an activated gamma-phospho-Glu-tRNA(Gln). This is Glutamyl-tRNA(Gln) amidotransferase subunit B, mitochondrial from Cryptococcus neoformans var. neoformans serotype D (strain JEC21 / ATCC MYA-565) (Filobasidiella neoformans).